The chain runs to 228 residues: Biosynthetic peptidoglycan transglycosylase (228 aa).

The helical transmembrane segment at 8 to 28 threads the bilayer; that stretch reads GVAALLALFLLYQLWIFGHIV.

Belongs to the glycosyltransferase 51 family.

It localises to the cell inner membrane. It catalyses the reaction [GlcNAc-(1-&gt;4)-Mur2Ac(oyl-L-Ala-gamma-D-Glu-L-Lys-D-Ala-D-Ala)](n)-di-trans,octa-cis-undecaprenyl diphosphate + beta-D-GlcNAc-(1-&gt;4)-Mur2Ac(oyl-L-Ala-gamma-D-Glu-L-Lys-D-Ala-D-Ala)-di-trans,octa-cis-undecaprenyl diphosphate = [GlcNAc-(1-&gt;4)-Mur2Ac(oyl-L-Ala-gamma-D-Glu-L-Lys-D-Ala-D-Ala)](n+1)-di-trans,octa-cis-undecaprenyl diphosphate + di-trans,octa-cis-undecaprenyl diphosphate + H(+). The protein operates within cell wall biogenesis; peptidoglycan biosynthesis. Its function is as follows. Peptidoglycan polymerase that catalyzes glycan chain elongation from lipid-linked precursors. The sequence is that of Biosynthetic peptidoglycan transglycosylase from Laribacter hongkongensis (strain HLHK9).